Consider the following 150-residue polypeptide: Galectin-2 (150 aa).

The Galectin domain occupies 9 to 141 (NQVKLQNDFK…FSSPVTVDVH (133 aa)). Residues His51, Arg55, Asn64, Glu75, and Arg77 each contribute to the a carbohydrate site.

As to quaternary structure, homotetramer. Oligomerization is required for carbohydrate binding.

It localises to the secreted. It is found in the extracellular space. Its subcellular location is the extracellular matrix. The protein localises to the cell wall. The protein resides in the endomembrane system. Its function is as follows. Binds lactose. May play a role in fruiting body formation. Displays toxicity towards the nematode C.elegans by binding to a specific Gal-beta-1,4-Fuc-alpha-1,6 modification of N-glycan cores on C.elegans intestinal cells. The chain is Galectin-2 (Cgl2) from Coprinopsis cinerea (Inky cap fungus).